The primary structure comprises 168 residues: Translationally-controlled tumor protein homolog (168 aa).

The TCTP domain occupies 1 to 168 (MLLYKDVISG…FKDGLVSEKF (168 aa)). The residue at position 78 (Ser-78) is a Phosphoserine.

It belongs to the TCTP family.

The protein localises to the cytoplasm. Functionally, involved in calcium binding and microtubule stabilization. May be a guanine nucleotide-free chaperone (GFC). The sequence is that of Translationally-controlled tumor protein homolog (p23fy) from Schizosaccharomyces pombe (strain 972 / ATCC 24843) (Fission yeast).